We begin with the raw amino-acid sequence, 326 residues long: Immune-associated nucleotide-binding protein 4 (326 aa).

The AIG1-type G domain occupies 17 to 225; the sequence is EPIKNIVLVG…FTDEMHRKIQ (209 aa). Residues 26–33 are G1; sequence GRTGNGKS. GTP-binding positions include 26–34 and Ser-47; that span reads GRTGNGKSA. A G2 region spans residues 53 to 57; the sequence is GVTMK. The G3 stretch occupies residues 75 to 78; the sequence is DTPG. Residues 145–148 form a G4 region; the sequence is TGGD. A G5 region spans residues 184-186; sequence DNR. Asn-185 contacts GTP. Residues 217 to 241 are a coiled coil; that stretch reads TDEMHRKIQKEAETLREQQKEVESK.

It belongs to the TRAFAC class TrmE-Era-EngA-EngB-Septin-like GTPase superfamily. AIG1/Toc34/Toc159-like paraseptin GTPase family. IAN subfamily. Expressed in radicles of the germinating seeds.

This Arabidopsis thaliana (Mouse-ear cress) protein is Immune-associated nucleotide-binding protein 4.